We begin with the raw amino-acid sequence, 244 residues long: Triosephosphate isomerase (244 aa).

8–10 is a substrate binding site; the sequence is NWK. The active-site Electrophile is histidine 93. Glutamate 161 serves as the catalytic Proton acceptor. Residues glycine 167, serine 206, and 227–228 contribute to the substrate site; that span reads GG.

This sequence belongs to the triosephosphate isomerase family. In terms of assembly, homodimer.

The protein resides in the cytoplasm. It catalyses the reaction D-glyceraldehyde 3-phosphate = dihydroxyacetone phosphate. It participates in carbohydrate biosynthesis; gluconeogenesis. Its pathway is carbohydrate degradation; glycolysis; D-glyceraldehyde 3-phosphate from glycerone phosphate: step 1/1. Functionally, involved in the gluconeogenesis. Catalyzes stereospecifically the conversion of dihydroxyacetone phosphate (DHAP) to D-glyceraldehyde-3-phosphate (G3P). The polypeptide is Triosephosphate isomerase (Deinococcus radiodurans (strain ATCC 13939 / DSM 20539 / JCM 16871 / CCUG 27074 / LMG 4051 / NBRC 15346 / NCIMB 9279 / VKM B-1422 / R1)).